A 237-amino-acid polypeptide reads, in one-letter code: Sugar fermentation stimulation protein homolog (237 aa).

It belongs to the SfsA family.

This is Sugar fermentation stimulation protein homolog from Thioalkalivibrio sulfidiphilus (strain HL-EbGR7).